Consider the following 324-residue polypeptide: Adenosine kinase (324 aa).

Substrate contacts are provided by residues Ser-8, Asp-12, Ser-36, Gly-48, Asn-52, Phe-102, Phe-116, and 172–173 (QQ). ATP contacts are provided by residues Asn-195, 223 to 228 (TLGPKG), and Gly-256. Asp-257 serves as a coordination point for substrate. The active-site Proton acceptor is the Asp-257.

Belongs to the carbohydrate kinase PfkB family. As to quaternary structure, homodimer. Mg(2+) serves as cofactor.

The enzyme catalyses adenosine + ATP = AMP + ADP + H(+). It catalyses the reaction adenosine + GTP = GDP + AMP + H(+). The catalysed reaction is dGTP + adenosine = dGDP + AMP + H(+). It functions in the pathway purine metabolism; AMP biosynthesis via salvage pathway; AMP from adenosine: step 1/1. Catalyzes the phosphorylation of adenosine to adenosine monophosphate (AMP). Prefers dGTP and GTP to ATP as phosphate donors in vitro. The polypeptide is Adenosine kinase (adoK) (Mycobacterium bovis (strain ATCC BAA-935 / AF2122/97)).